Consider the following 273-residue polypeptide: Urease accessory protein UreD (273 aa).

Belongs to the UreD family. UreD, UreF and UreG form a complex that acts as a GTP-hydrolysis-dependent molecular chaperone, activating the urease apoprotein by helping to assemble the nickel containing metallocenter of UreC. The UreE protein probably delivers the nickel.

It is found in the cytoplasm. Functionally, required for maturation of urease via the functional incorporation of the urease nickel metallocenter. This chain is Urease accessory protein UreD, found in Rhizobium etli (strain ATCC 51251 / DSM 11541 / JCM 21823 / NBRC 15573 / CFN 42).